Reading from the N-terminus, the 71-residue chain is Brevinin-1SN1 (71 aa).

The first 22 residues, 1–22 (MFTMKKPLLLLFFLGTINLSLC), serve as a signal peptide directing secretion. Residues 23-45 (EEERNADEEEKRDGDDEMDAEVE) constitute a propeptide, removed in mature form. Cysteine 65 and cysteine 71 are joined by a disulfide.

The protein belongs to the frog skin active peptide (FSAP) family. Brevinin subfamily. Expressed by the skin glands.

The protein resides in the secreted. Its function is as follows. Antimicrobial peptide. Active against some Gram-negative and a variety of Gram-positive bacterial strains. Active against fungus C.glabrata 090902 but not against C.albicans ATCC 10231. Shows hemolytic activity against human erythrocytes. This Sylvirana spinulosa (Fine-spined frog) protein is Brevinin-1SN1.